A 388-amino-acid chain; its full sequence is MLKMSRNEVLLYALVISAFLSISLFEGFVILTLLLVLYKILKERKIKGSLTPGILLYSLSTVLSTAIFYPKRFLKGIEEGLFQFIYFLNLKKEEVKGFSKIFPKLLLGISLILLPVVFYKFYKYGEPKPIWGGTFEVGFFYALFSITTFLLFFKERRFIYIPLFLLFLAVIFLSARRSMMLAFFVIFYLILFVLFKSKKLGKLAFWSVNFLIILSFIGGYVYLSQKDHRFKTLNDIILGKKELNYQNLNSISSGRLNLLLEGISIIKEDIENKRFINLLIGHGVRAGEYMPHRYGMTQHRYESIFIVSEFIERGILGLLGILYIYFMYFKKVLSFRIKREEDIYTYLLSVPLGLHLIQSVFTFFWDALLPLYLLLFKAFETLQDERKP.

The next 8 membrane-spanning stretches (helical) occupy residues 15 to 37 (VISA…LLVL), 97 to 119 (GFSK…VVFY), 129 to 151 (PIWG…TFLL), 158 to 175 (FIYI…FLSA), 179 to 196 (MMLA…VLFK), 203 to 225 (LAFW…YLSQ), 304 to 326 (IFIV…YIYF), and 347 to 369 (LLSV…DALL).

The protein resides in the cell membrane. This is an uncharacterized protein from Aquifex aeolicus (strain VF5).